Consider the following 131-residue polypeptide: Peptide methionine sulfoxide reductase MsrB (131 aa).

The MsrB domain occupies 8–130 (LEEWKEMLDP…NSVCLDLVPR (123 aa)). Zn(2+) is bound by residues cysteine 47, cysteine 50, cysteine 96, and cysteine 99. Residue cysteine 119 is the Nucleophile of the active site.

It belongs to the MsrB Met sulfoxide reductase family. It depends on Zn(2+) as a cofactor.

The enzyme catalyses L-methionyl-[protein] + [thioredoxin]-disulfide + H2O = L-methionyl-(R)-S-oxide-[protein] + [thioredoxin]-dithiol. This is Peptide methionine sulfoxide reductase MsrB from Pseudomonas savastanoi pv. phaseolicola (strain 1448A / Race 6) (Pseudomonas syringae pv. phaseolicola (strain 1448A / Race 6)).